Reading from the N-terminus, the 207-residue chain is Guanylate kinase (207 aa).

A Guanylate kinase-like domain is found at 6–185 (GLLIVLSGPS…AKNRIQCIVE (180 aa)). 13 to 20 (GPSGVGKG) serves as a coordination point for ATP.

Belongs to the guanylate kinase family.

It is found in the cytoplasm. The catalysed reaction is GMP + ATP = GDP + ADP. In terms of biological role, essential for recycling GMP and indirectly, cGMP. This Staphylococcus aureus (strain bovine RF122 / ET3-1) protein is Guanylate kinase.